The sequence spans 473 residues: Trigger factor (473 aa).

The region spanning Gly162–Pro243 is the PPIase FKBP-type domain. Residues Thr433 to Lys473 are disordered. Residues Ala444 to Lys473 show a composition bias toward acidic residues.

The protein belongs to the FKBP-type PPIase family. Tig subfamily.

Its subcellular location is the cytoplasm. The enzyme catalyses [protein]-peptidylproline (omega=180) = [protein]-peptidylproline (omega=0). Functionally, involved in protein export. Acts as a chaperone by maintaining the newly synthesized protein in an open conformation. Functions as a peptidyl-prolyl cis-trans isomerase. The protein is Trigger factor of Mycolicibacterium vanbaalenii (strain DSM 7251 / JCM 13017 / BCRC 16820 / KCTC 9966 / NRRL B-24157 / PYR-1) (Mycobacterium vanbaalenii).